A 946-amino-acid polypeptide reads, in one-letter code: Structure-specific endonuclease subunit SLX4 (946 aa).

The span at Met1–Ser14 shows a compositional bias: pro residues. Disordered regions lie at residues Met1–Asp35, Gln54–Val119, Pro147–Thr318, Ala339–Leu399, Thr416–Ile471, Phe577–Arg748, and Ala765–Ser799. Residues Gln54–Glu74 are compositionally biased toward basic and acidic residues. Composition is skewed to basic residues over residues Lys160–Ala169 and Lys182–Lys195. A compositionally biased stretch (basic and acidic residues) spans Ala278–Pro287. Residues Ser453–Lys469 are compositionally biased toward basic residues. The segment covering Lys627–Met636 has biased composition (basic and acidic residues). Over residues Lys707–Ser717 the composition is skewed to polar residues. Positions Lys722 to Lys733 are enriched in basic and acidic residues.

Belongs to the SLX4 family. In terms of assembly, forms a heterodimer with SLX1. In terms of processing, phosphorylated in response to DNA damage.

It localises to the nucleus. In terms of biological role, regulatory subunit of the SLX1-SLX4 structure-specific endonuclease that resolves DNA secondary structures generated during DNA repair and recombination. Has endonuclease activity towards branched DNA substrates, introducing single-strand cuts in duplex DNA close to junctions with ss-DNA. The protein is Structure-specific endonuclease subunit SLX4 of Phaeosphaeria nodorum (strain SN15 / ATCC MYA-4574 / FGSC 10173) (Glume blotch fungus).